Consider the following 1485-residue polypeptide: Formin BNR1 (1485 aa).

Disordered regions lie at residues His65–His88, His226–Thr248, and Ala549–Glu575. Residues Asn110–Gly636 form the GBD/FH3 domain. A compositionally biased stretch (polar residues) spans Thr231 to Thr248. Over residues Leu553 to Asp564 the composition is skewed to acidic residues. Residues Ala660–Ala734 are a coiled coil. The interval Gly746–Pro874 is disordered. The FH2 domain occupies Val953–Asp1368. 2 coiled-coil regions span residues His1240–Asn1312 and Gln1351–Glu1382. The disordered stretch occupies residues Leu1447 to Ser1471.

Belongs to the formin homology family. BNI1 subfamily. Interacts with IQG1.

The protein localises to the bud neck. It is found in the cell septum. In terms of biological role, may organize microtubules by mediating spindle positioning and movement in the budding process. Required for cytokinesis and the maintenance of polarized hyphal growth. The sequence is that of Formin BNR1 (BNR1) from Candida albicans (strain SC5314 / ATCC MYA-2876) (Yeast).